The primary structure comprises 151 residues: Large ribosomal subunit protein bL9 (151 aa).

Belongs to the bacterial ribosomal protein bL9 family.

Functionally, binds to the 23S rRNA. The polypeptide is Large ribosomal subunit protein bL9 (Prochlorococcus marinus (strain MIT 9515)).